The primary structure comprises 139 residues: Actin-depolymerizing factor 1 (139 aa).

Positions 5–139 (ASGMAVCDEC…SMDIVKSRAL (135 aa)) constitute an ADF-H domain.

This sequence belongs to the actin-binding proteins ADF family.

Functionally, actin-depolymerizing protein. Severs actin filaments (F-actin) and binds to actin monomers. In Oryza sativa subsp. japonica (Rice), this protein is Actin-depolymerizing factor 1 (ADF1).